Reading from the N-terminus, the 573-residue chain is Trehalose synthase (573 aa).

Residue Asp-70 participates in substrate binding. Asn-112 contributes to the Ca(2+) binding site. Substrate-binding residues include His-113 and Gln-178. Asp-180 is a binding site for Ca(2+). Arg-208 is a substrate binding site. Residue Asp-210 is the Nucleophile of the active site. Residues Tyr-214, Leu-215, and Glu-217 each contribute to the Ca(2+) site. Residue Glu-252 is the Proton donor of the active site. 2 residues coordinate substrate: His-326 and Asp-327.

It belongs to the glycosyl hydrolase 13 family. TreS subfamily.

It carries out the reaction D-maltose = alpha,alpha-trehalose. In terms of biological role, catalyzes the reversible interconversion of maltose and alpha,alpha-trehalose by transglucosylation. The polypeptide is Trehalose synthase (treS) (Pimelobacter sp. (strain R48)).